The chain runs to 181 residues: Adenine phosphoribosyltransferase (181 aa).

Belongs to the purine/pyrimidine phosphoribosyltransferase family. As to quaternary structure, homodimer.

The protein localises to the cytoplasm. The enzyme catalyses AMP + diphosphate = 5-phospho-alpha-D-ribose 1-diphosphate + adenine. It functions in the pathway purine metabolism; AMP biosynthesis via salvage pathway; AMP from adenine: step 1/1. Its function is as follows. Catalyzes a salvage reaction resulting in the formation of AMP, that is energically less costly than de novo synthesis. The polypeptide is Adenine phosphoribosyltransferase (Brucella suis (strain ATCC 23445 / NCTC 10510)).